The primary structure comprises 324 residues: Acetyl-coenzyme A carboxylase carboxyl transferase subunit alpha (324 aa).

One can recognise a CoA carboxyltransferase C-terminal domain in the interval 42–296 (RLSELEEEVY…EKALTRLAEK (255 aa)).

Belongs to the AccA family. Acetyl-CoA carboxylase is a heterohexamer composed of biotin carboxyl carrier protein (AccB), biotin carboxylase (AccC) and two subunits each of ACCase subunit alpha (AccA) and ACCase subunit beta (AccD).

The protein resides in the cytoplasm. It catalyses the reaction N(6)-carboxybiotinyl-L-lysyl-[protein] + acetyl-CoA = N(6)-biotinyl-L-lysyl-[protein] + malonyl-CoA. The protein operates within lipid metabolism; malonyl-CoA biosynthesis; malonyl-CoA from acetyl-CoA: step 1/1. In terms of biological role, component of the acetyl coenzyme A carboxylase (ACC) complex. First, biotin carboxylase catalyzes the carboxylation of biotin on its carrier protein (BCCP) and then the CO(2) group is transferred by the carboxyltransferase to acetyl-CoA to form malonyl-CoA. The chain is Acetyl-coenzyme A carboxylase carboxyl transferase subunit alpha from Shouchella clausii (strain KSM-K16) (Alkalihalobacillus clausii).